The primary structure comprises 63 residues: Cecropin-1 (63 aa).

A signal peptide spans Met-1 to Thr-21. The propeptide occupies Glu-22–Ala-23. Arg-62 carries the post-translational modification Arginine amide.

The protein belongs to the cecropin family.

Its subcellular location is the secreted. Its function is as follows. Cecropins have lytic and antibacterial activity against several Gram-positive and Gram-negative bacteria. The protein is Cecropin-1 (CEC1) of Ceratitis capitata (Mediterranean fruit fly).